Reading from the N-terminus, the 1153-residue chain is Protein unc-13 homolog 4B (1153 aa).

Residues 54-84 (VLKSSLAPLEENGSGGEEDSDESPDGTLQLS) form a disordered region. The 127-residue stretch at 162-288 (ATHEEIYEAA…MKEIAVTASS (127 aa)) folds into the C2 1 domain. Ca(2+) is bound by residues Asp-195, Asp-201, Asp-252, Phe-253, and Asp-254. Residues 637–755 (FEVYLILKRY…RCCIFYAQQM (119 aa)) enclose the MHD1 domain. Residues 869–975 (SNSMDQLMMY…LETSDLIHQY (107 aa)) form the MHD2 domain. One can recognise a C2 2 domain in the interval 990 to 1114 (PYGQLTITAQ…EATPPGEQIM (125 aa)). Positions 1019, 1025, 1083, and 1085 each coordinate Ca(2+).

This sequence belongs to the unc-13 family. In terms of assembly, interacts with Cam. Ca(2+) is required as a cofactor.

It localises to the cytoplasm. The protein resides in the cytoskeleton. It is found in the cell projection. The protein localises to the filopodium. Its subcellular location is the late endosome. It localises to the lysosome. Essential for tracheal development in embryos. Functions with the GTPase Rab39 and downstream of dnd, to regulate lumen fusion between previously separate tracheal branches (anastomosis). Essential component of secretory lysosome-related organelles (SLs) that are present in the tracheal fusion tip cells (FCs). Mediates intracellular fusion of the extending tracheal stalk cell lumen in the FCs by recruiting the SNARE complex component Syx1A to the SLs, this may then enable the SLs to interact with complementary SNAREs (such as Syb) present in the apical membrane of the FC-FC interface and the membranes of the separate tracheal stalk cells. May also function in the maturation and exocytosis of the SLs. The protein is Protein unc-13 homolog 4B of Drosophila melanogaster (Fruit fly).